The chain runs to 1308 residues: Misshapen-like kinase 1 (1308 aa).

The region spanning Phe25–Ile289 is the Protein kinase domain. ATP contacts are provided by residues Val31 to Val39 and Lys54. Asp153 serves as the catalytic Proton acceptor. Disordered stretches follow at residues Arg299–Gly347, Lys363–Pro383, and Gln395–Met862. Acidic residues predominate over residues Glu317–His333. Residues Ser324 and Ser326 each carry the phosphoserine modification. Over residues Gln371–Gln380 the composition is skewed to low complexity. Residues Arg396 to Gln466 show a composition bias toward basic and acidic residues. Over residues Leu479–Gln497 the composition is skewed to low complexity. Arg503 and Arg511 each carry omega-N-methylarginine. The span at Ala520–Arg530 shows a compositional bias: basic and acidic residues. The span at Arg600–Arg610 shows a compositional bias: polar residues. Low complexity predominate over residues Pro623–Pro633. Ser644 is subject to Phosphoserine. The span at Gln673–Ser685 shows a compositional bias: polar residues. A phosphoserine mark is found at Asp702, Ser720, Ser729, Ser745, Ser746, and Ser750. Residues Asp702 to Asp714 are compositionally biased toward basic and acidic residues. Residues Ala773–Met797 are compositionally biased toward basic and acidic residues. Residues Glu804–Pro820 show a composition bias toward acidic residues. A mediates interaction with RAP2A region spans residues Met842–Trp1308. Thr867 bears the Phosphothreonine mark. The segment at Gly881–Leu918 is disordered. Residues Pro891–Pro905 show a composition bias toward polar residues. The region spanning Asn995–Val1282 is the CNH domain.

It belongs to the protein kinase superfamily. STE Ser/Thr protein kinase family. STE20 subfamily. As to quaternary structure, interacts with RAP2A and TANC1. Interacts with NCK1. Requires Mg(2+) as cofactor. Autophosphorylated. In terms of tissue distribution, appears to be ubiquitous, expressed in all tissue types examined. Highly expressed in the brain, moderately expressed in kidney and spleen, low levels present in heart and skeletal muscle. Isoform 2 is more abundant in the brain than isoform 1.

The protein localises to the cytoplasm. Its subcellular location is the postsynaptic density. The protein resides in the cell projection. It is found in the axon. It localises to the dendrite. It catalyses the reaction L-seryl-[protein] + ATP = O-phospho-L-seryl-[protein] + ADP + H(+). It carries out the reaction L-threonyl-[protein] + ATP = O-phospho-L-threonyl-[protein] + ADP + H(+). Functionally, serine/threonine kinase which acts as a negative regulator of Ras-related Rap2-mediated signal transduction to control neuronal structure and AMPA receptor trafficking. Required for normal synaptic density, dendrite complexity, as well as surface AMPA receptor expression in hippocampal neurons. Can activate the JNK and MAPK14/p38 pathways and mediates stimulation of the stress-activated protein kinase MAPK14/p38 MAPK downstream of the Raf/ERK pathway. Phosphorylates TANC1 upon stimulation by RAP2A, MBP and SMAD1. Has an essential function in negative selection of thymocytes, perhaps by coupling NCK1 to activation of JNK1. Activator of the Hippo signaling pathway which plays a pivotal role in organ size control and tumor suppression by restricting proliferation and promoting apoptosis. MAP4Ks act in parallel to and are partially redundant with STK3/MST2 and STK4/MST2 in the phosphorylation and activation of LATS1/2, and establish MAP4Ks as components of the expanded Hippo pathway. This is Misshapen-like kinase 1 from Mus musculus (Mouse).